A 270-amino-acid polypeptide reads, in one-letter code: Aliphatic sulfonates import ATP-binding protein SsuB (270 aa).

The ABC transporter domain occupies 17–238 (LASKGLRKTF…ARGSHRLAAL (222 aa)). Residue 49–56 (GRSGCGKS) participates in ATP binding. Positions 248 to 270 (STPGTAPEPDPVAPLPTQLRWAH) are disordered.

It belongs to the ABC transporter superfamily. Aliphatic sulfonates importer (TC 3.A.1.17.2) family. In terms of assembly, the complex is composed of two ATP-binding proteins (SsuB), two transmembrane proteins (SsuC) and a solute-binding protein (SsuA).

It localises to the cell inner membrane. The enzyme catalyses ATP + H2O + aliphatic sulfonate-[sulfonate-binding protein]Side 1 = ADP + phosphate + aliphatic sulfonateSide 2 + [sulfonate-binding protein]Side 1.. Functionally, part of the ABC transporter complex SsuABC involved in aliphatic sulfonates import. Responsible for energy coupling to the transport system. The polypeptide is Aliphatic sulfonates import ATP-binding protein SsuB (Pseudomonas putida (strain ATCC 47054 / DSM 6125 / CFBP 8728 / NCIMB 11950 / KT2440)).